Reading from the N-terminus, the 75-residue chain is Kappa-scoloptoxin(03)-Ssm1e (75 aa).

Residues methionine 1–serine 23 form the signal peptide.

Belongs to the scoloptoxin-03 family. Contains 3 disulfide bonds. In terms of tissue distribution, expressed by the venom gland.

The protein localises to the secreted. Inhibits voltage-gated potassium channels. The polypeptide is Kappa-scoloptoxin(03)-Ssm1e (Scolopendra mutilans (Chinese red-headed centipede)).